A 404-amino-acid chain; its full sequence is Cysteine desulfurase IscS (404 aa).

Pyridoxal 5'-phosphate contacts are provided by residues 75–76 (AT), N155, Q183, and 203–205 (SGH). K206 is modified (N6-(pyridoxal phosphate)lysine). T243 provides a ligand contact to pyridoxal 5'-phosphate. C328 functions as the Cysteine persulfide intermediate in the catalytic mechanism. [2Fe-2S] cluster is bound at residue C328.

It belongs to the class-V pyridoxal-phosphate-dependent aminotransferase family. NifS/IscS subfamily. In terms of assembly, homodimer. Forms a heterotetramer with IscU, interacts with other sulfur acceptors. Pyridoxal 5'-phosphate serves as cofactor.

Its subcellular location is the cytoplasm. The enzyme catalyses (sulfur carrier)-H + L-cysteine = (sulfur carrier)-SH + L-alanine. Its pathway is cofactor biosynthesis; iron-sulfur cluster biosynthesis. Its function is as follows. Master enzyme that delivers sulfur to a number of partners involved in Fe-S cluster assembly, tRNA modification or cofactor biosynthesis. Catalyzes the removal of elemental sulfur atoms from cysteine to produce alanine. Functions as a sulfur delivery protein for Fe-S cluster synthesis onto IscU, an Fe-S scaffold assembly protein, as well as other S acceptor proteins. The chain is Cysteine desulfurase IscS from Serratia proteamaculans (strain 568).